The sequence spans 95 residues: NADH-quinone oxidoreductase subunit K (95 aa).

Transmembrane regions (helical) follow at residues 1-21 (MSYLLASALLFALGVYGVLTR), 25-45 (ILVFLSIELMLNAANLSLVGF), and 59-79 (MVIAVAAAEVAVGLGLIVAIF).

Belongs to the complex I subunit 4L family. NDH-1 is composed of 15 different subunits. Subunits NuoA, H, J, K, L, M, N constitute the membrane sector of the complex.

The protein localises to the cell inner membrane. The catalysed reaction is a quinone + NADH + 5 H(+)(in) = a quinol + NAD(+) + 4 H(+)(out). Functionally, NDH-1 shuttles electrons from NADH, via FMN and iron-sulfur (Fe-S) centers, to quinones in the respiratory chain. The immediate electron acceptor for the enzyme in this species is believed to be a menaquinone. Couples the redox reaction to proton translocation (for every two electrons transferred, four hydrogen ions are translocated across the cytoplasmic membrane), and thus conserves the redox energy in a proton gradient. In Thermus thermophilus (strain ATCC BAA-163 / DSM 7039 / HB27), this protein is NADH-quinone oxidoreductase subunit K.